Here is a 969-residue protein sequence, read N- to C-terminus: RNA polymerase-associated protein RapA (969 aa).

A Helicase ATP-binding domain is found at 164 to 334 (EVGRRYAPRV…FARLRLLDPD (171 aa)). An ATP-binding site is contributed by 177 to 184 (DEVGLGKT). The short motif at 280-283 (DEAH) is the DEAH box element. In terms of domain architecture, Helicase C-terminal spans 492–668 (RVNWLLELLK…GKSDGLESLI (177 aa)).

The protein belongs to the SNF2/RAD54 helicase family. RapA subfamily. In terms of assembly, interacts with the RNAP. Has a higher affinity for the core RNAP than for the holoenzyme. Its ATPase activity is stimulated by binding to RNAP.

Functionally, transcription regulator that activates transcription by stimulating RNA polymerase (RNAP) recycling in case of stress conditions such as supercoiled DNA or high salt concentrations. Probably acts by releasing the RNAP, when it is trapped or immobilized on tightly supercoiled DNA. Does not activate transcription on linear DNA. Probably not involved in DNA repair. The sequence is that of RNA polymerase-associated protein RapA from Aliivibrio fischeri (strain MJ11) (Vibrio fischeri).